Here is a 147-residue protein sequence, read N- to C-terminus: Adenylylsulfatase HINT1 (147 aa).

Residues 37 to 147 (IFDKIISKEI…GGRQMNWPPG (111 aa)) form the HIT domain. Residues 131-135 (HIHVH) carry the Histidine triad motif motif. The active-site Tele-AMP-histidine intermediate is histidine 133. Histidine 135 contacts substrate.

The protein localises to the peroxisome. It is found in the plastid. It localises to the chloroplast. The enzyme catalyses adenosine 5'-phosphosulfate + H2O = sulfate + AMP + 2 H(+). Functionally, possesses adenylylsulfatase activity in vitro. The chain is Adenylylsulfatase HINT1 from Arabidopsis thaliana (Mouse-ear cress).